Consider the following 2347-residue polypeptide: Proto-oncogene tyrosine-protein kinase ROS (2347 aa).

The N-terminal stretch at 1 to 27 (MKNIYCLIPKLVNFATLGCLWISVVQC) is a signal peptide. At 28–1859 (TVLNSCLKSC…LVGDDFWIPE (1832 aa)) the chain is on the extracellular side. N-linked (GlcNAc...) asparagine glycans are attached at residues asparagine 52, asparagine 114, and asparagine 123. 2 Fibronectin type-III domains span residues 101 to 196 (LPTA…VPET) and 197 to 285 (APLI…SSSA). Residues asparagine 324, asparagine 352, asparagine 396, asparagine 471, asparagine 607, asparagine 628, asparagine 706, asparagine 714, asparagine 732, asparagine 939, asparagine 961, asparagine 1015, asparagine 1087, asparagine 1090, asparagine 1095, asparagine 1211, asparagine 1272, asparagine 1330, asparagine 1458, asparagine 1461, asparagine 1474, asparagine 1499, asparagine 1565, asparagine 1669, asparagine 1715, asparagine 1738, and asparagine 1808 are each glycosylated (N-linked (GlcNAc...) asparagine). Residues 557–671 (LPGRPQELSV…EPSVGTTLVP (115 aa)) form the Fibronectin type-III 3 domain. 2 Fibronectin type-III domains span residues 947-1042 (IPDS…TVPS) and 1043-1150 (APEN…TSEI). Fibronectin type-III domains lie at 1450–1556 (DTVE…TKNG), 1557–1656 (VPEA…VEMF), 1658–1751 (TPEK…TKAG), and 1752–1854 (VPNK…VGDD). A helical membrane pass occupies residues 1860–1882 (TSFILTIIVGIFLVVTIPLTFVW). Residues 1883–2347 (HRRLKNQKSA…THSGYGDGSD (465 aa)) are Cytoplasmic-facing. The region spanning 1945-2222 (LTLRLLLGSG…DQLQLFRNFF (278 aa)) is the Protein kinase domain. Residues 1951 to 1959 (LGSGAFGEV) and lysine 1980 contribute to the ATP site. Aspartate 2079 (proton acceptor) is an active-site residue. Phosphotyrosine; by autocatalysis is present on tyrosine 2274. The interval 2284 to 2311 (GEEKSEGPLGSQESESCGLRKEEKEPHA) is disordered. The span at 2301–2311 (GLRKEEKEPHA) shows a compositional bias: basic and acidic residues. Phosphotyrosine; by autocatalysis is present on tyrosine 2334.

It belongs to the protein kinase superfamily. Tyr protein kinase family. Insulin receptor subfamily. Interacts with PTPN6 (via SH2 1 domain); the interaction is direct and promotes ROS1 dephosphorylation. Interacts with PTPN11; may activate the PI3 kinase-mTOR signaling pathway. Interacts with VAV3; constitutive interaction mediating VAV3 phosphorylation. Post-translationally, phosphorylated. Probably autophosphorylates. Phosphorylation at Tyr-2274 is required for the interaction with PTPN6 that mediates ROS1 dephosphorylation. Phosphorylation at Tyr-2274 stimulates the kinase activity and the activation of the ERK1 signaling cascade. Phosphorylation at Tyr-2274 and/or Tyr-2334 recruits PTPN11. In terms of tissue distribution, expressed in brain. Expression is increased in primary gliomas.

It is found in the cell membrane. The enzyme catalyses L-tyrosyl-[protein] + ATP = O-phospho-L-tyrosyl-[protein] + ADP + H(+). With respect to regulation, inhibited by dephosphorylation by PTPN6. Its function is as follows. Receptor tyrosine kinase (RTK) that plays a role in epithelial cell differentiation and regionalization of the proximal epididymal epithelium. NELL2 is an endogenous ligand for ROS1. Upon endogenous stimulation by NELL2, ROS1 activates the intracellular signaling pathway and triggers epididymal epithelial differentiation and subsequent sperm maturation. May activate several downstream signaling pathways related to cell differentiation, proliferation, growth and survival including the PI3 kinase-mTOR signaling pathway. Mediates the phosphorylation of PTPN11, an activator of this pathway. May also phosphorylate and activate the transcription factor STAT3 to control anchorage-independent cell growth. Mediates the phosphorylation and the activation of VAV3, a guanine nucleotide exchange factor regulating cell morphology. May activate other downstream signaling proteins including AKT1, MAPK1, MAPK3, IRS1 and PLCG2. The sequence is that of Proto-oncogene tyrosine-protein kinase ROS (ROS1) from Homo sapiens (Human).